A 383-amino-acid polypeptide reads, in one-letter code: uncharacterized protein (383 aa).

2 helical membrane passes run 49–69 and 347–367; these read VDLLAAVQASVEPAALIGCVA and LLGGIPLAGFFAAGEIGPVAG.

This sequence to M.tuberculosis Rv0874c.

The protein resides in the cell membrane. This is an uncharacterized protein from Mycobacterium tuberculosis (strain CDC 1551 / Oshkosh).